The chain runs to 192 residues: uncharacterized protein (192 aa).

The Nudix hydrolase domain occupies 29–160 (HRQAAVLIPI…PLDIYRRGDS (132 aa)). Positions 67-89 (GAVDDTDTSVIAAALREAEEEVA) match the Nudix box motif. Mg(2+) is bound by residues Glu-83 and Glu-87.

The protein belongs to the Nudix hydrolase family. PCD1 subfamily. The cofactor is Mn(2+). Mg(2+) serves as cofactor.

Functionally, probably mediates the hydrolysis of some nucleoside diphosphate derivatives. This is an uncharacterized protein from Escherichia coli O6:H1 (strain CFT073 / ATCC 700928 / UPEC).